The sequence spans 781 residues: Isoquinoline 1-oxidoreductase subunit beta (781 aa).

Heterodimer of an alpha chain and a beta chain.

The catalysed reaction is isoquinoline + A + H2O = isoquinolin-1(2H)-one + AH2. Specific towards N-containing N-heterocyclic substrates, including isoquinoline, isoquinolin-5-ol, phthalazine and quinazoline. The chain is Isoquinoline 1-oxidoreductase subunit beta (iorB) from Brevundimonas diminuta (Pseudomonas diminuta).